The chain runs to 237 residues: 2,3-bisphosphoglycerate-dependent phosphoglycerate mutase (237 aa).

Residues 8–15 (RHGQSAWN), 21–22 (TG), Arg-60, 87–90 (ERHY), Lys-98, 114–115 (RR), and 180–181 (GN) each bind substrate. Catalysis depends on His-9, which acts as the Tele-phosphohistidine intermediate. Residue Glu-87 is the Proton donor/acceptor of the active site.

It belongs to the phosphoglycerate mutase family. BPG-dependent PGAM subfamily. Homodimer.

The catalysed reaction is (2R)-2-phosphoglycerate = (2R)-3-phosphoglycerate. It functions in the pathway carbohydrate degradation; glycolysis; pyruvate from D-glyceraldehyde 3-phosphate: step 3/5. In terms of biological role, catalyzes the interconversion of 2-phosphoglycerate and 3-phosphoglycerate. The sequence is that of 2,3-bisphosphoglycerate-dependent phosphoglycerate mutase from Hyphomonas neptunium (strain ATCC 15444).